The following is a 259-amino-acid chain: Polycomb group RING finger protein 1 (259 aa).

At alanine 2 the chain carries N-acetylalanine. Serine 3 is modified (phosphoserine). Lysine 24 is covalently cross-linked (Glycyl lysine isopeptide (Lys-Gly) (interchain with G-Cter in SUMO2)). The RING-type zinc-finger motif lies at 47-86; the sequence is CCLCAGYFVDATTITECLHTFCKSCIVKYLQTSKYCPMCN. A required for repressor activity region spans residues 86–247; that stretch reads NIKIHETQPL…LSRWFGKPSP (162 aa). Residue lysine 88 forms a Glycyl lysine isopeptide (Lys-Gly) (interchain with G-Cter in SUMO2) linkage. Positions 150-255 are required for the interaction with the KDM2B-SKP1 heterodimeric complex; that stretch reads LPFSSFDHSK…SPLLLQYSVK (106 aa). The segment at 167–255 is RING-finger and WD40-associated ubiquitin-like domain (RAWUL); sufficient for interaction with BCOR and BCORL1; that stretch reads EQLNLCLERL…SPLLLQYSVK (89 aa).

As to quaternary structure, interacts with BCORL1, forming heterodimers. The PCGF1-BCORL1 heterodimeric complex interacts with the KDM2B-SKP1 heterodimeric complex to form a homotetrameric polycomb repression complex 1 (PRC1.1). Component of the repressive BCOR complex containing a Polycomb group subcomplex at least composed of RYBP, RING1 and RNF2/RING2. Specifically interacts with BCOR, RING1 and RNF2/RING2. Component of a PRC1-like complex. Interacts with CBX6, CBX7 and CBX8. Interacts with DPPA4, NANOG, POU5F1 and RYBP. In terms of tissue distribution, ubiquitous.

The protein localises to the nucleus. In terms of biological role, component of the Polycomb group (PcG) multiprotein BCOR complex, a complex required to maintain the transcriptionally repressive state of some genes, such as BCL6 and the cyclin-dependent kinase inhibitor, CDKN1A. Transcriptional repressor that may be targeted to the DNA by BCL6; this transcription repressor activity may be related to PKC signaling pathway. Represses CDKN1A expression by binding to its promoter, and this repression is dependent on the retinoic acid response element (RARE element). Promotes cell cycle progression and enhances cell proliferation as well. May have a positive role in tumor cell growth by down-regulating CDKN1A. Component of a Polycomb group (PcG) multiprotein PRC1-like complex, a complex class required to maintain the transcriptionally repressive state of many genes, including Hox genes, throughout development. PcG PRC1 complex acts via chromatin remodeling and modification of histones; it mediates monoubiquitination of histone H2A 'Lys-119', rendering chromatin heritably changed in its expressibility. Within the PRC1-like complex, regulates RNF2 ubiquitin ligase activity. Regulates the expression of DPPA4 and NANOG in the NT2 embryonic carcinoma cells. This Homo sapiens (Human) protein is Polycomb group RING finger protein 1 (PCGF1).